The primary structure comprises 239 residues: Lectin (239 aa).

Asn17 and Asn113 each carry an N-linked (GlcNAc...) asparagine glycan.

The protein belongs to the leguminous lectin family. In terms of assembly, homodimer.

Functionally, galactose and N-acetyllactosamine specific lectin. In Erythrina crista-galli (Cockspur coral tree), this protein is Lectin.